Reading from the N-terminus, the 83-residue chain is uncharacterized protein (83 aa).

This is an uncharacterized protein from Rhizobium meliloti (strain 1021) (Ensifer meliloti).